The primary structure comprises 415 residues: Gamma-glutamyl phosphate reductase (415 aa).

This sequence belongs to the gamma-glutamyl phosphate reductase family.

Its subcellular location is the cytoplasm. It carries out the reaction L-glutamate 5-semialdehyde + phosphate + NADP(+) = L-glutamyl 5-phosphate + NADPH + H(+). Its pathway is amino-acid biosynthesis; L-proline biosynthesis; L-glutamate 5-semialdehyde from L-glutamate: step 2/2. Catalyzes the NADPH-dependent reduction of L-glutamate 5-phosphate into L-glutamate 5-semialdehyde and phosphate. The product spontaneously undergoes cyclization to form 1-pyrroline-5-carboxylate. In Thermotoga maritima (strain ATCC 43589 / DSM 3109 / JCM 10099 / NBRC 100826 / MSB8), this protein is Gamma-glutamyl phosphate reductase.